A 142-amino-acid chain; its full sequence is Malate dehydrogenase, mitochondrial (142 aa).

NAD(+)-binding positions include 1–6 and D26; that span reads ASGGIG. The substrate site is built by R73 and R79. Residues N86 and 109-111 each bind NAD(+); that span reads ITN. N111 provides a ligand contact to substrate.

The protein belongs to the LDH/MDH superfamily. MDH type 1 family. As to quaternary structure, homodimer.

The protein localises to the mitochondrion matrix. It carries out the reaction (S)-malate + NAD(+) = oxaloacetate + NADH + H(+). This chain is Malate dehydrogenase, mitochondrial, found in Schistosoma mansoni (Blood fluke).